Here is a 367-residue protein sequence, read N- to C-terminus: MAGNSIGQAFKVTTCGESHGAGLMAIVDGVPSGLPLTSEDLQLDLDRRKPGTSKFATQRREPDEVEIISGVFEGKTTGTSIGLLIRNTNQKSKDYSDIKDTFRPGHADYTYSMKYGFRDYRGGGRSSARETAMRVAAGAIAKKYLKQRLGIEIHGHVVLMGNEAAAVTDPNQIDWQFVNSNPFFCADPDALPRFEALIERLRKEGTSCGAKLEVIASGVPVGLGEPVFDRLDADIAHAMMSINAVKGVEIGDGMRVAEQFGHIARDELTPDGFTANHSGGILGGISSGQDIKVSIALKPTSSITTPGKSIDQQGQPVDMLTKGRHDPCVGVRATPIAEAMLAIVLLDHYLRHRGQNADVTQPVAPIA.

R48 contacts NADP(+). Residues 125–127, 243–244, G283, 298–302, and R324 contribute to the FMN site; these read RSS, NA, and KPTSS.

It belongs to the chorismate synthase family. As to quaternary structure, homotetramer. FMNH2 is required as a cofactor.

The enzyme catalyses 5-O-(1-carboxyvinyl)-3-phosphoshikimate = chorismate + phosphate. It participates in metabolic intermediate biosynthesis; chorismate biosynthesis; chorismate from D-erythrose 4-phosphate and phosphoenolpyruvate: step 7/7. Catalyzes the anti-1,4-elimination of the C-3 phosphate and the C-6 proR hydrogen from 5-enolpyruvylshikimate-3-phosphate (EPSP) to yield chorismate, which is the branch point compound that serves as the starting substrate for the three terminal pathways of aromatic amino acid biosynthesis. This reaction introduces a second double bond into the aromatic ring system. The polypeptide is Chorismate synthase (Psychrobacter sp. (strain PRwf-1)).